The primary structure comprises 246 residues: tRNA (guanine-N(1)-)-methyltransferase (246 aa).

Gly114 provides a ligand contact to S-adenosyl-L-methionine.

It belongs to the RNA methyltransferase TrmD family. As to quaternary structure, homodimer.

The protein resides in the cytoplasm. The catalysed reaction is guanosine(37) in tRNA + S-adenosyl-L-methionine = N(1)-methylguanosine(37) in tRNA + S-adenosyl-L-homocysteine + H(+). Its function is as follows. Specifically methylates guanosine-37 in various tRNAs. The chain is tRNA (guanine-N(1)-)-methyltransferase from Novosphingobium aromaticivorans (strain ATCC 700278 / DSM 12444 / CCUG 56034 / CIP 105152 / NBRC 16084 / F199).